Here is a 262-residue protein sequence, read N- to C-terminus: Snake venom serine protease catroxase-1 (262 aa).

A signal peptide spans 1-18; the sequence is MVLIRVLANLLILQLSYA. A propeptide spanning residues 19 to 24 is cleaved from the precursor; it reads QKSSEP. A Peptidase S1 domain is found at 25–250; that stretch reads IIGGDECNRN…HLDWIQSIIA (226 aa). 6 disulfides stabilise this stretch: cysteine 31–cysteine 162, cysteine 49–cysteine 65, cysteine 97–cysteine 257, cysteine 141–cysteine 211, cysteine 173–cysteine 190, and cysteine 201–cysteine 226. Histidine 64 (charge relay system) is an active-site residue. Residue asparagine 102 is glycosylated (N-linked (GlcNAc...) asparagine). Aspartate 109 (charge relay system) is an active-site residue. N-linked (GlcNAc...) asparagine glycosylation is present at asparagine 169. Serine 205 (charge relay system) is an active-site residue.

It belongs to the peptidase S1 family. Snake venom subfamily. As to quaternary structure, monomer. Expressed by the venom gland.

It localises to the secreted. In terms of biological role, snake venom serine protease that may act in the hemostasis system of the prey. This is Snake venom serine protease catroxase-1 from Crotalus atrox (Western diamondback rattlesnake).